Here is a 721-residue protein sequence, read N- to C-terminus: ATP-dependent zinc metalloprotease FtsH (721 aa).

The Cytoplasmic portion of the chain corresponds to 1–44; that stretch reads MYFLKKIVNLFSSKIESEDNNVKKDDLTQPRKQSPEARKRRNRR. Residues 45–65 traverse the membrane as a helical segment; the sequence is IIFWLIILLIIGTIIGVIIYF. The Extracellular portion of the chain corresponds to 66–190; that stretch reads SVRKEYDNVI…AGIPSSGFNP (125 aa). A helical membrane pass occupies residues 191–211; it reads QVIISPLISIIFFIIFLYIIL. The Cytoplasmic segment spans residues 212–721; the sequence is RVSKAQSDSL…KDKEKDQKSN (510 aa). 279–286 provides a ligand contact to ATP; it reads GPPGTGKT. Residue histidine 498 participates in Zn(2+) binding. Glutamate 499 is a catalytic residue. Histidine 502 and aspartate 577 together coordinate Zn(2+). Residues 686–721 form a disordered region; it reads NKREASQKQANSSVEEAKVVDDEESIKDKEKDQKSN. Over residues 700 to 721 the composition is skewed to basic and acidic residues; that stretch reads EEAKVVDDEESIKDKEKDQKSN.

In the central section; belongs to the AAA ATPase family. It in the C-terminal section; belongs to the peptidase M41 family. As to quaternary structure, homohexamer. The cofactor is Zn(2+).

The protein resides in the cell membrane. Functionally, acts as a processive, ATP-dependent zinc metallopeptidase for both cytoplasmic and membrane proteins. Plays a role in the quality control of integral membrane proteins. The chain is ATP-dependent zinc metalloprotease FtsH from Ureaplasma parvum serovar 3 (strain ATCC 27815 / 27 / NCTC 11736).